We begin with the raw amino-acid sequence, 373 residues long: MKKGTQRLSRLFAAMAIAGFASYSMAADTIKIALAGPVTGPVAQYGDMQRAGALMAIEQINKAGGVNGAQLEGVIYDDACDPKQAVAVANKVVNDGVKFVVGHVCSSSTQPATDIYEDEGVLMITPSATAPEITSRGYKLIFRTIGLDNMQGPVAGKFIAERYKDKTIAVLHDKQQYGEGIATEVKKTVEDAGIKVAVFEGLNAGDKDFNALISKLKKAGVQFVYFGGYHPEMGLLLRQAKQAGLDARFMGPEGVGNSEITAIAGDASEGMLATLPRAFEQDPKNKALIDAFKAKNQDPSGIFVLPAYSAVTVIAKGIEKAGEADPEKVAEALRANTFETPTGNLGFDEKGDLKNFDFTVYEWHKDATRTEVK.

An N-terminal signal peptide occupies residues methionine 1 to alanine 26. A disulfide bridge connects residues cysteine 80 and cysteine 105.

This sequence belongs to the leucine-binding protein family.

It localises to the periplasm. In terms of biological role, component of the high-affinity leucine, isoleucine, valine transport system I (LIV-I), which is operative without Na(+) and is specific for alanine and threonine, in addition to branched-chain amino acids. Binds L-leucine, L-isoleucine, L-valine, L-threonine and L-alanine with nanomolar affinities. Can also bind L-homoserine with high affinity. The protein is Leucine-, isoleucine-, valine-, threonine-, and alanine-binding protein (braC) of Pseudomonas aeruginosa (strain ATCC 15692 / DSM 22644 / CIP 104116 / JCM 14847 / LMG 12228 / 1C / PRS 101 / PAO1).